Here is a 39-residue protein sequence, read N- to C-terminus: SPbeta prophage-derived membrane protein YosA (39 aa).

The helical transmembrane segment at 19–39 (SFVLIVVLFILLIIVGATFLY) threads the bilayer.

It belongs to the SscA family.

Its subcellular location is the membrane. The chain is SPbeta prophage-derived membrane protein YosA (yosA) from Bacillus subtilis (strain 168).